The primary structure comprises 364 residues: tRNA 2-selenouridine synthase (364 aa).

Residues 14 to 137 enclose the Rhodanese domain; the sequence is LIADTPIIDV…LRQTAIQATI (124 aa). Residue Cys97 is the S-selanylcysteine intermediate of the active site.

The protein belongs to the SelU family. In terms of assembly, monomer.

It catalyses the reaction 5-methylaminomethyl-2-thiouridine(34) in tRNA + selenophosphate + (2E)-geranyl diphosphate + H2O + H(+) = 5-methylaminomethyl-2-selenouridine(34) in tRNA + (2E)-thiogeraniol + phosphate + diphosphate. It carries out the reaction 5-methylaminomethyl-2-thiouridine(34) in tRNA + (2E)-geranyl diphosphate = 5-methylaminomethyl-S-(2E)-geranyl-thiouridine(34) in tRNA + diphosphate. The enzyme catalyses 5-methylaminomethyl-S-(2E)-geranyl-thiouridine(34) in tRNA + selenophosphate + H(+) = 5-methylaminomethyl-2-(Se-phospho)selenouridine(34) in tRNA + (2E)-thiogeraniol. The catalysed reaction is 5-methylaminomethyl-2-(Se-phospho)selenouridine(34) in tRNA + H2O = 5-methylaminomethyl-2-selenouridine(34) in tRNA + phosphate. Functionally, involved in the post-transcriptional modification of the uridine at the wobble position (U34) of tRNA(Lys), tRNA(Glu) and tRNA(Gln). Catalyzes the conversion of 2-thiouridine (S2U-RNA) to 2-selenouridine (Se2U-RNA). Acts in a two-step process involving geranylation of 2-thiouridine (S2U) to S-geranyl-2-thiouridine (geS2U) and subsequent selenation of the latter derivative to 2-selenouridine (Se2U) in the tRNA chain. This is tRNA 2-selenouridine synthase from Shigella flexneri serotype 5b (strain 8401).